The primary structure comprises 695 residues: F-box only protein 34 (695 aa).

3 disordered regions span residues 239 to 275 (GQSR…QGEP), 316 to 373 (LTNG…CPSL), and 472 to 524 (GQDQ…PGGS). Positions 556–608 (QQYMACLPHHIIVKIFRLLPTLSLAILKCTCRYFKSIIEYYNIRPADSRWVRD) constitute an F-box domain.

As to quaternary structure, directly interacts with SKP1 and CUL1.

Functionally, substrate-recognition component of the SCF (SKP1-CUL1-F-box protein)-type E3 ubiquitin ligase complex. The protein is F-box only protein 34 (Fbxo34) of Mus musculus (Mouse).